We begin with the raw amino-acid sequence, 338 residues long: Phenylalanine--tRNA ligase alpha subunit (338 aa).

Position 253 (E253) interacts with Mg(2+).

This sequence belongs to the class-II aminoacyl-tRNA synthetase family. Phe-tRNA synthetase alpha subunit type 1 subfamily. Tetramer of two alpha and two beta subunits. Mg(2+) serves as cofactor.

It localises to the cytoplasm. It carries out the reaction tRNA(Phe) + L-phenylalanine + ATP = L-phenylalanyl-tRNA(Phe) + AMP + diphosphate + H(+). The sequence is that of Phenylalanine--tRNA ligase alpha subunit from Gloeobacter violaceus (strain ATCC 29082 / PCC 7421).